The chain runs to 665 residues: MGTRRDVRFVSSGVKLPCADAAPAPAPAPTLLSAALPFARIGRAIDGVVRHVARSLPRLPVARAETGAGAAAAPIALPRRQKDGGGGGGGEERVLISEVAVRGKDGEPLERPELEAAAAAALRACRPNAALTVREVQEDVHRVVESGLFRSCMPVAVDTRDGIRLVFEVEPNQDFHGLVCEGANMLPSKFLEDAFHDRHGKIINIRHLDQVIKSVNGWYQERGLTGLVSYAEILSGGILRLQVSEAEVNNINIRFLDRRTGEPTVGKTQPETILRHLTTKKGQAYNRAQVKRDVETILTMGIMEDVTIIPQPVGDSNKVDLVMNLVERPSGGFSAGGGISSGITNGPLSGLIGSFAYSHRNVFGRNKKLNLSLERGQIDSIFRLNYTDPWIDGDNKRTSRTIMVQNSRTPGTLIHGGDHPDHGPITIGRVTAGIEYSRPFRPKWSGTLGLIFQHAGARDDKGNPIIRDFYNSQLTASGNAYDDTLLAKLESVYTDSGDRSSTMFVFNIEQGLPILPEWLSFNRVTARLRQGYEIGPARLLLSASGGHVEGNFSPHEAFAIGGTNSVRGYEEGAVGSGRSYAVGSGEVSCRMFGPLEGVVFGDYGSDLSSGPKVPGDPAGARGKPGSGYGYGVGVRVDSPLGPLRLEYAFNDKQARRFHFGVGYRN.

A POTRA domain is found at A246–R328.

Belongs to the OEP80 (TC 1.B.33.2) family.

Its subcellular location is the plastid. It localises to the chloroplast outer membrane. This Oryza sativa subsp. japonica (Rice) protein is Outer envelope protein 80, chloroplastic (OEP80).